The following is a 541-amino-acid chain: Cytochrome bc1 complex cytochrome b subunit (541 aa).

A helical membrane pass occupies residues Phe36 to Leu56. Residues His105 and His119 each contribute to the heme site. A run of 3 helical transmembrane segments spans residues Ala109–Phe129, Trp137–Leu157, and Ile169–Phe189. Heme is bound by residues His206 and His221. 5 helical membrane-spanning segments follow: residues Val207 to Tyr227, Ser256 to Ile276, Val325 to Ile345, Leu371 to Trp391, and Ile408 to Leu428.

This sequence belongs to the cytochrome b family. In terms of assembly, the cytochrome bc1 complex is composed of a cytochrome b (QcrB), the Rieske protein iron-sulfur (QcrA) and a diheme cytochrome c (QcrC) subunit. The cofactor is heme.

Its subcellular location is the cell membrane. The catalysed reaction is a quinol + 2 Fe(III)-[cytochrome c](out) = a quinone + 2 Fe(II)-[cytochrome c](out) + 2 H(+)(out). Functionally, cytochrome b subunit of the cytochrome bc1 complex, an essential component of the respiratory electron transport chain required for ATP synthesis. The bc1 complex catalyzes the oxidation of menaquinol and the reduction of cytochrome c in the respiratory chain. The bc1 complex operates through a Q-cycle mechanism that couples electron transfer to generation of the proton gradient that drives ATP synthesis. This Corynebacterium efficiens (strain DSM 44549 / YS-314 / AJ 12310 / JCM 11189 / NBRC 100395) protein is Cytochrome bc1 complex cytochrome b subunit (qcrB).